The chain runs to 219 residues: Lipid transferase CIDEA (219 aa).

A CIDE-N domain is found at Pro-33–Pro-110. The interval Cys-163–Ser-180 is amphipathic helix.

It belongs to the CIDE family. As to quaternary structure, homodimer. Interacts with CIDEC. Directly interacts with CEBPB. Interacts with isoform CLSTN3beta of CLSTN3; inhibiting the lipid transferase activity of CIDEA. Expressed in omental and subcutaneous adipose tissue (at protein level).

Its subcellular location is the lipid droplet. The protein localises to the nucleus. The enzyme catalyses a triacyl-sn-glycerol(in) = a triacyl-sn-glycerol(out). Lipid transferase that promotes unilocular lipid droplet formation by mediating lipid droplet fusion. Lipid droplet fusion promotes their enlargement, restricting lipolysis and favoring lipid storage. Localizes on the lipid droplet surface, at focal contact sites between lipid droplets, and mediates atypical lipid droplet fusion by promoting directional net neutral lipid transfer from the smaller to larger lipid droplets. The transfer direction may be driven by the internal pressure difference between the contacting lipid droplet pair and occurs at a lower rate than that promoted by CIDEC. May also act as a CEBPB coactivator in epithelial cells to control the expression of a subset of CEBPB downstream target genes, including ID2, IGF1, PRLR, SOCS1, SOCS3, XDH, but not casein. By interacting with CEBPB, strengthens the association of CEBPB with the XDH promoter, increases histone acetylation and dissociates HDAC1 from the promoter. When overexpressed, induces apoptosis; the physiological significance of its role in apoptosis is unclear. This Homo sapiens (Human) protein is Lipid transferase CIDEA.